Here is a 447-residue protein sequence, read N- to C-terminus: Putative metabolite transport protein HI_0418 (447 aa).

At 1-28 (MCKPQQKHYGRQVMNTQNSLKQVATATM) the chain is on the cytoplasmic side. Residues 29 to 49 (VGTAIEYFDNYIYAMAAVLVF) form a helical membrane-spanning segment. The Periplasmic portion of the chain corresponds to 50–63 (NHQFFHAVDPLSGQ). Residues 64 to 84 (IAALSTLALTFIARPLGAILF) traverse the membrane as a helical segment. The Cytoplasmic segment spans residues 85–96 (GHFGDRFGRKNT). The helical transmembrane segment at 97–117 (FVMSLLLMGISTVVIGLLPTY) threads the bilayer. Residues 118 to 119 (DS) lie on the Periplasmic side of the membrane. A helical membrane pass occupies residues 120-140 (IGIWATILLCLCRIGQGIGLG). Over 141–167 (GEWGGAALVAVENAPEGKRGWYGTFPQ) the chain is Cytoplasmic. Residues 168-188 (LGAPLGLLLANGVFLGITAIF) form a helical membrane-spanning segment. Over 189 to 194 (GQEAMT) the chain is Periplasmic. The helical transmembrane segment at 195–215 (EWAWRIPFLSSVILVAIGLYV) threads the bilayer. Topologically, residues 216 to 249 (RLKLTEAPIFLAALNKPKPKRLPMLEVVTTHFKP) are cytoplasmic. Residues 250–270 (FFLGMLVCIAGYVLFYIMIAF) traverse the membrane as a helical segment. Residues 271-295 (SQIYAKSAPTVSEAGYAMGLGFSPQ) are Periplasmic-facing. Residues 296–316 (IFTALLMASAVSLAITIAASG) traverse the membrane as a helical segment. The Cytoplasmic segment spans residues 317-325 (KYIDKIGRR). A helical transmembrane segment spans residues 326 to 346 (TWLIWTTVGVAIFGLSLPLFL). Residues 347–354 (ENGTTTSL) lie on the Periplasmic side of the membrane. The helical transmembrane segment at 355–375 (FWFLFIGMGLIGMGYGPLASF) threads the bilayer. Residues 376-390 (LPELFPTHARYSGAS) are Cytoplasmic-facing. Residues 391 to 411 (LTYNIAGLFGASVAAIIALPL) traverse the membrane as a helical segment. Residues 412–418 (NAHYGLK) are Periplasmic-facing. The helical transmembrane segment at 419–439 (GVGIYLTLNAVLSLVGLWFIS) threads the bilayer. At 440-447 (ETKDKLLS) the chain is on the cytoplasmic side.

The protein belongs to the major facilitator superfamily. Metabolite:H+ Symporter (MHS) family (TC 2.A.1.6) family.

It is found in the cell inner membrane. The chain is Putative metabolite transport protein HI_0418 from Haemophilus influenzae (strain ATCC 51907 / DSM 11121 / KW20 / Rd).